The chain runs to 394 residues: Protein arginine N-methyltransferase 8 (394 aa).

The N-myristoyl glycine moiety is linked to residue Gly2. The interval 16–40 (MAENAAESTEVNSPPSQPPQPVVPA) is disordered. 2 short sequence motifs (SH3-binding) span residues 29-42 (PPSQ…PAKP) and 53-58 (PSCPGR). Residues 30–39 (PSQPPQPVVP) show a composition bias toward pro residues. Arg58 is modified (omega-N-methylarginine; by autocatalysis). Arg73 is modified (asymmetric dimethylarginine; by autocatalysis). In terms of domain architecture, SAM-dependent MTase PRMT-type spans 73–394 (RDYYFDSYAH…TSVSNDYKMR (322 aa)). Residues His86, Arg95, Gly119, 119 to 122 (GSGT), Glu141, and Glu170 each bind S-adenosyl-L-methionine. Catalysis depends on residues Glu185 and Glu194.

It belongs to the class I-like SAM-binding methyltransferase superfamily. Protein arginine N-methyltransferase family. PRMT8 subfamily. Homodimer. Tetramer; individual homodimers associates to form a homotetramer. Homooctamer; individual homodimers associates to form a homooctamer and homooligomerization is required for proper localization to the cell membrane. Heterodimer with PRMT1; heterodimerization may recruit PRMT1 activity to the plasma membrane. Interacts with PRMT2 (via the SH3 domain). Interacts with FYN (via the SH3 domain). Interacts with EWS; independently of EWS methylation status. As to expression, brain-specific.

Its subcellular location is the cell membrane. It carries out the reaction L-arginyl-[protein] + S-adenosyl-L-methionine = N(omega)-methyl-L-arginyl-[protein] + S-adenosyl-L-homocysteine + H(+). It catalyses the reaction L-arginyl-[protein] + 2 S-adenosyl-L-methionine = N(omega),N(omega)-dimethyl-L-arginyl-[protein] + 2 S-adenosyl-L-homocysteine + 2 H(+). S-adenosyl-L-methionine-dependent and membrane-associated arginine methyltransferase that can both catalyze the formation of omega-N monomethylarginine (MMA) and asymmetrical dimethylarginine (aDMA) in proteins such as NIFK, myelin basic protein, histone H4, H2A and H2A/H2B dimer. Able to mono- and dimethylate EWS protein; however its precise role toward EWS remains unclear as it still interacts with fully methylated EWS. In Homo sapiens (Human), this protein is Protein arginine N-methyltransferase 8.